Reading from the N-terminus, the 100-residue chain is Large ribosomal subunit protein uL23 (100 aa).

This sequence belongs to the universal ribosomal protein uL23 family. In terms of assembly, part of the 50S ribosomal subunit. Contacts protein L29, and trigger factor when it is bound to the ribosome.

In terms of biological role, one of the early assembly proteins it binds 23S rRNA. One of the proteins that surrounds the polypeptide exit tunnel on the outside of the ribosome. Forms the main docking site for trigger factor binding to the ribosome. This is Large ribosomal subunit protein uL23 from Shigella dysenteriae serotype 1 (strain Sd197).